The sequence spans 278 residues: Rhomboid protease GlpG (278 aa).

The next 6 membrane-spanning stretches (helical) occupy residues 95 to 115 (GPLT…MQIL), 143 to 163 (AFLH…WYLG), 170 to 190 (LGSG…GWAQ), 192 to 212 (LFSG…MGYC), 224 to 241 (LMLP…LVAG), and 245 to 267 (ILGM…LMAF). Ser-202 acts as the Nucleophile in catalysis. His-255 is an active-site residue.

Belongs to the peptidase S54 family.

It localises to the cell inner membrane. The catalysed reaction is Cleaves type-1 transmembrane domains using a catalytic dyad composed of serine and histidine that are contributed by different transmembrane domains.. Functionally, rhomboid-type serine protease that catalyzes intramembrane proteolysis. The chain is Rhomboid protease GlpG from Serratia proteamaculans (strain 568).